A 156-amino-acid polypeptide reads, in one-letter code: Ribosomal RNA large subunit methyltransferase H (156 aa).

Residues Leu73, Gly104, and 123 to 128 (LSDLTL) contribute to the S-adenosyl-L-methionine site.

Belongs to the RNA methyltransferase RlmH family. Homodimer.

It is found in the cytoplasm. It catalyses the reaction pseudouridine(1915) in 23S rRNA + S-adenosyl-L-methionine = N(3)-methylpseudouridine(1915) in 23S rRNA + S-adenosyl-L-homocysteine + H(+). Functionally, specifically methylates the pseudouridine at position 1915 (m3Psi1915) in 23S rRNA. This is Ribosomal RNA large subunit methyltransferase H from Leptothrix cholodnii (strain ATCC 51168 / LMG 8142 / SP-6) (Leptothrix discophora (strain SP-6)).